A 388-amino-acid polypeptide reads, in one-letter code: DNA replication and repair protein RecF (388 aa).

30-37 (GANGNGKT) is an ATP binding site.

Belongs to the RecF family.

The protein resides in the cytoplasm. Its function is as follows. The RecF protein is involved in DNA metabolism; it is required for DNA replication and normal SOS inducibility. RecF binds preferentially to single-stranded, linear DNA. It also seems to bind ATP. This chain is DNA replication and repair protein RecF, found in Nocardia farcinica (strain IFM 10152).